A 158-amino-acid polypeptide reads, in one-letter code: Transcription elongation factor GreA (158 aa).

Positions 47–74 (NSEYDEAKNEQAFTEGRIIQLENMLKNA) form a coiled coil.

Belongs to the GreA/GreB family.

Necessary for efficient RNA polymerase transcription elongation past template-encoded arresting sites. The arresting sites in DNA have the property of trapping a certain fraction of elongating RNA polymerases that pass through, resulting in locked ternary complexes. Cleavage of the nascent transcript by cleavage factors such as GreA or GreB allows the resumption of elongation from the new 3'terminus. GreA releases sequences of 2 to 3 nucleotides. The sequence is that of Transcription elongation factor GreA from Clostridium perfringens (strain ATCC 13124 / DSM 756 / JCM 1290 / NCIMB 6125 / NCTC 8237 / Type A).